Here is a 58-residue protein sequence, read N- to C-terminus: Small ribosomal subunit protein bS21 (58 aa).

The segment at arginine 36–arginine 58 is disordered. Over residues tyrosine 45 to arginine 58 the composition is skewed to basic residues.

It belongs to the bacterial ribosomal protein bS21 family.

The polypeptide is Small ribosomal subunit protein bS21 (Prochlorococcus marinus (strain NATL1A)).